The primary structure comprises 297 residues: Virulence genes transcriptional activator SpvR (297 aa).

Positions 1–61 (MDFLINKKLK…IRKNGTLIPT (61 aa)) constitute an HTH lysR-type domain. Positions 21 to 40 (FSIATSVLYITRTPLSRVIS) form a DNA-binding region, H-T-H motif.

The protein belongs to the LysR transcriptional regulatory family.

It localises to the cytoplasm. In terms of biological role, positive regulator for the plasmid-encoded virulence factors SpvA, SpvB, and SpvC. The chain is Virulence genes transcriptional activator SpvR (spvR) from Salmonella dublin.